A 358-amino-acid chain; its full sequence is Photosystem II protein D1 2 (358 aa).

Helical transmembrane passes span 28–45 (YVGWFGVLMIPCLLAATI), 117–132 (HFLIGISAYMGRQWEL), and 141–155 (WICVAYAAPLSAAMV). H117 serves as a coordination point for chlorophyll a. Position 125 (Y125) interacts with pheophytin a. [CaMn4O5] cluster contacts are provided by D169 and E188. A helical transmembrane segment spans residues 196-217 (FHMLGVAGVFGGSLFSAMHGSL). H197 serves as a coordination point for chlorophyll a. Residues H214 and 263 to 264 (SF) contribute to the a quinone site. H214 lines the Fe cation pocket. H271 is a binding site for Fe cation. A helical transmembrane segment spans residues 273–287 (FLAAWPVVGIWFTSM). H331, E332, D341, and A343 together coordinate [CaMn4O5] cluster. The propeptide occupies 344–358 (TTESAPVALQAPAVG).

Belongs to the reaction center PufL/M/PsbA/D family. In terms of assembly, PSII is composed of 1 copy each of membrane proteins PsbA, PsbB, PsbC, PsbD, PsbE, PsbF, PsbH, PsbI, PsbJ, PsbK, PsbL, PsbM, PsbT, PsbX, PsbY, PsbZ, Psb30/Ycf12, peripheral proteins PsbO, CyanoQ (PsbQ), PsbU, PsbV and a large number of cofactors. It forms dimeric complexes. The D1/D2 heterodimer binds P680, chlorophylls that are the primary electron donor of PSII, and subsequent electron acceptors. It shares a non-heme iron and each subunit binds pheophytin, quinone, additional chlorophylls, carotenoids and lipids. D1 provides most of the ligands for the Mn4-Ca-O5 cluster of the oxygen-evolving complex (OEC). There is also a Cl(-1) ion associated with D1 and D2, which is required for oxygen evolution. The PSII complex binds additional chlorophylls, carotenoids and specific lipids. serves as cofactor. Post-translationally, tyr-160 forms a radical intermediate that is referred to as redox-active TyrZ, YZ or Y-Z. In terms of processing, C-terminally processed by CtpA; processing is essential to allow assembly of the oxygen-evolving complex and thus photosynthetic growth.

The protein localises to the cellular thylakoid membrane. It catalyses the reaction 2 a plastoquinone + 4 hnu + 2 H2O = 2 a plastoquinol + O2. Its function is as follows. Photosystem II (PSII) is a light-driven water:plastoquinone oxidoreductase that uses light energy to abstract electrons from H(2)O, generating O(2) and a proton gradient subsequently used for ATP formation. It consists of a core antenna complex that captures photons, and an electron transfer chain that converts photonic excitation into a charge separation. The D1/D2 (PsbA/PsbD) reaction center heterodimer binds P680, the primary electron donor of PSII as well as several subsequent electron acceptors. The polypeptide is Photosystem II protein D1 2 (Synechococcus sp. (strain RCC307)).